Here is a 637-residue protein sequence, read N- to C-terminus: tRNA-dihydrouridine(47) synthase [NAD(P)(+)]-like (637 aa).

Disordered stretches follow at residues 1–21 (MAET…ACER), 41–63 (LDGD…EPGA), and 85–105 (ERQV…VKPA). The segment covering 89–104 (PKRARGQNKSRPHVKP) has biased composition (basic residues). 2 consecutive C3H1-type zinc fingers follow at residues 107 to 137 (YDKD…HDVG) and 145 to 175 (ADLG…HLGP). Thr-260 carries the phosphothreonine modification. A phosphoserine mark is found at Ser-263 and Ser-264. Residues 298-300 (PLT) and Gln-352 each bind FMN. Cys-383 (proton donor) is an active-site residue. Residue Lys-403 forms a Glycyl lysine isopeptide (Lys-Gly) (interchain with G-Cter in SUMO2) linkage. Residues Lys-422, His-452, 484-486 (NGD), and 507-508 (AR) each bind FMN.

The protein belongs to the Dus family. Dus3 subfamily. FMN is required as a cofactor.

It carries out the reaction 5,6-dihydrouridine(47) in tRNA + NAD(+) = uridine(47) in tRNA + NADH + H(+). The enzyme catalyses 5,6-dihydrouridine(47) in tRNA + NADP(+) = uridine(47) in tRNA + NADPH + H(+). It catalyses the reaction a 5,6-dihydrouridine in mRNA + NAD(+) = a uridine in mRNA + NADH + H(+). The catalysed reaction is a 5,6-dihydrouridine in mRNA + NADP(+) = a uridine in mRNA + NADPH + H(+). In terms of biological role, catalyzes the synthesis of dihydrouridine, a modified base, in various RNAs, such as tRNAs, mRNAs and some long non-coding RNAs (lncRNAs). Mainly modifies the uridine in position 47 (U47) in the D-loop of most cytoplasmic tRNAs. Also able to mediate the formation of dihydrouridine in some mRNAs, thereby regulating their translation. The sequence is that of tRNA-dihydrouridine(47) synthase [NAD(P)(+)]-like from Mus musculus (Mouse).